Consider the following 120-residue polypeptide: MSSTSEPTYQLAPPDSLKQVYLTLAAGFAVGLGIFLLRTNTLPHTGDNIHHLPHGGCYRDGTKSIRYNSPGVATSSNIFLPAVAVLCILALLHVPFFQPDRVRRRCCRFYWCADPHHPTV.

Over 1–16 (MSSTSEPTYQLAPPDS) the chain is Cytoplasmic. Residues 17–37 (LKQVYLTLAAGFAVGLGIFLL) traverse the membrane as a helical segment. Residues 38-76 (RTNTLPHTGDNIHHLPHGGCYRDGTKSIRYNSPGVATSS) are Lumenal-facing. Residues 77-97 (NIFLPAVAVLCILALLHVPFF) traverse the membrane as a helical segment. The Cytoplasmic portion of the chain corresponds to 98–120 (QPDRVRRRCCRFYWCADPHHPTV).

Belongs to the Tymovirales TGBp2 protein family.

It is found in the host endoplasmic reticulum membrane. Its function is as follows. Plays a role in viral cell-to-cell propagation, by facilitating genome transport to neighboring plant cells through plasmosdesmata,. The sequence is that of Movement protein TGB2 (ORF3) from Lolium latent virus (isolate Lolium/USA/US1/-) (LoLV).